Reading from the N-terminus, the 344-residue chain is [LysW]-L-2-aminoadipate 6-phosphate reductase (344 aa).

Residues 12–15, 36–38, and Leu75 contribute to the NADP(+) site; these read SGYA and SRR. Cys148 is an active-site residue. 3 residues coordinate NADP(+): Ser180, Ala184, and Asn312.

This sequence belongs to the NAGSA dehydrogenase family. Type 1 subfamily. LysY sub-subfamily. Homotetramer. Interacts with LysW. May form a ternary complex with LysW and LysZ.

The protein localises to the cytoplasm. It carries out the reaction [amino-group carrier protein]-C-terminal-N-(1-carboxy-5-oxopentan-1-yl)-L-glutamine + phosphate + NADP(+) = [amino-group carrier protein]-C-terminal-N-(1-carboxy-5-phosphooxy-5-oxopentan-1-yl)-L-glutamine + NADPH + H(+). The protein operates within amino-acid biosynthesis; L-lysine biosynthesis via AAA pathway; L-lysine from L-alpha-aminoadipate (Thermus route): step 3/5. Catalyzes the NADPH-dependent reduction of [LysW]-aminoadipate 6-phosphate to yield [LysW]-aminoadipate 6-semialdehyde. The chain is [LysW]-L-2-aminoadipate 6-phosphate reductase from Thermus thermophilus (strain ATCC BAA-163 / DSM 7039 / HB27).